Reading from the N-terminus, the 235-residue chain is uncharacterized protein (235 aa).

Disordered regions lie at residues 20–64 (IHPN…LPIK) and 140–164 (SQFF…NFDQ). Composition is skewed to low complexity over residues 30-60 (NNNN…SNNN) and 140-161 (SQFF…NNKN). The stretch at 174–213 (KYMEFLSDIEQLNSDLKESKDNLESISIEMVLLETRLKGL) forms a coiled coil.

This is an uncharacterized protein from Dictyostelium discoideum (Social amoeba).